The following is a 439-amino-acid chain: (p)ppApp synthetase toxin Tas1 (439 aa).

The protein resides in the secreted. It catalyses the reaction AMP + ATP = adenosine 3'-diphosphate,5'-phosphate + AMP + H(+). It carries out the reaction ADP + ATP = adenosine 3'-diphosphate,5'-diphosphate + AMP. The enzyme catalyses 2 ATP = adenosine 3'-diphosphate,5'-triphosphate + AMP. In terms of biological role, type VI secretion exported toxin that pyrophosphorylates adenosine nucleotides to produce (p)ppApp. Thereby, depletes cellular ADP and ATP to dysregulate central metabolism in competitor cells. This Pseudomonas aeruginosa (strain UCBPP-PA14) protein is (p)ppApp synthetase toxin Tas1 (tas1).